Reading from the N-terminus, the 401-residue chain is UPF0242 protein CCA_01002 (401 aa).

It belongs to the UPF0242 family.

This Chlamydia caviae (strain ATCC VR-813 / DSM 19441 / 03DC25 / GPIC) (Chlamydophila caviae) protein is UPF0242 protein CCA_01002.